A 428-amino-acid chain; its full sequence is Adenylosuccinate synthetase (428 aa).

GTP is bound by residues G12–K18 and G40–T42. D13 (proton acceptor) is an active-site residue. Mg(2+) contacts are provided by D13 and G40. Residues D13 to K16, N38 to H41, T128, R142, Q223, T238, and R302 contribute to the IMP site. The active-site Proton donor is the H41. T298–R304 contacts substrate. GTP contacts are provided by residues R304, K330–D332, and S412–G414.

The protein belongs to the adenylosuccinate synthetase family. In terms of assembly, homodimer. It depends on Mg(2+) as a cofactor.

It is found in the cytoplasm. It carries out the reaction IMP + L-aspartate + GTP = N(6)-(1,2-dicarboxyethyl)-AMP + GDP + phosphate + 2 H(+). The protein operates within purine metabolism; AMP biosynthesis via de novo pathway; AMP from IMP: step 1/2. Functionally, plays an important role in the de novo pathway of purine nucleotide biosynthesis. Catalyzes the first committed step in the biosynthesis of AMP from IMP. In Desulforamulus reducens (strain ATCC BAA-1160 / DSM 100696 / MI-1) (Desulfotomaculum reducens), this protein is Adenylosuccinate synthetase.